Here is a 673-residue protein sequence, read N- to C-terminus: UvrABC system protein B (673 aa).

Residues 26-183 form the Helicase ATP-binding domain; that stretch reads EGLEDGLAHQ…RRLAELQYAR (158 aa). 39-46 provides a ligand contact to ATP; it reads GVTGSGKT. Residues 92-115 carry the Beta-hairpin motif; it reads YYDYYQPEAYVPSSDTFIEKDASV. The region spanning 431–597 is the Helicase C-terminal domain; the sequence is QVDDLLSEIR…GLNKKVVDIL (167 aa). Positions 608-627 are disordered; that stretch reads AKGRGKSRPIVEPDNVPMDM. Positions 633 to 668 constitute a UVR domain; sequence QQKIHELEGLMMQHAQNLEFEEAAQIRDQLHQLRDL.

Belongs to the UvrB family. As to quaternary structure, forms a heterotetramer with UvrA during the search for lesions. Interacts with UvrC in an incision complex.

Its subcellular location is the cytoplasm. Functionally, the UvrABC repair system catalyzes the recognition and processing of DNA lesions. A damage recognition complex composed of 2 UvrA and 2 UvrB subunits scans DNA for abnormalities. Upon binding of the UvrA(2)B(2) complex to a putative damaged site, the DNA wraps around one UvrB monomer. DNA wrap is dependent on ATP binding by UvrB and probably causes local melting of the DNA helix, facilitating insertion of UvrB beta-hairpin between the DNA strands. Then UvrB probes one DNA strand for the presence of a lesion. If a lesion is found the UvrA subunits dissociate and the UvrB-DNA preincision complex is formed. This complex is subsequently bound by UvrC and the second UvrB is released. If no lesion is found, the DNA wraps around the other UvrB subunit that will check the other stand for damage. The polypeptide is UvrABC system protein B (Escherichia coli O7:K1 (strain IAI39 / ExPEC)).